The primary structure comprises 199 residues: Ribonuclease HII (199 aa).

Residues 12–199 (DLLAGTDEAG…FGPVKKILEG (188 aa)) enclose the RNase H type-2 domain. Positions 18, 19, and 110 each coordinate a divalent metal cation.

The protein belongs to the RNase HII family. It depends on Mn(2+) as a cofactor. Requires Mg(2+) as cofactor.

It is found in the cytoplasm. It carries out the reaction Endonucleolytic cleavage to 5'-phosphomonoester.. Endonuclease that specifically degrades the RNA of RNA-DNA hybrids. The sequence is that of Ribonuclease HII from Marinomonas sp. (strain MWYL1).